Here is a 357-residue protein sequence, read N- to C-terminus: Ribosomal large subunit pseudouridine synthase B (357 aa).

The span at 1 to 12 (MKPSQKQTQRQP) shows a compositional bias: polar residues. The tract at residues 1–76 (MKPSQKQTQR…ASNQPKAEGE (76 aa)) is disordered. Over residues 14–32 (FSKDSAKKRDFSAKNDRRS) the composition is skewed to basic and acidic residues. Residues 41–54 (TANTKKSAVNSDNK) show a composition bias toward polar residues. The region spanning 76–148 (EKLQKVLARA…ICRVLMYYKP (73 aa)) is the S4 RNA-binding domain. Asp-183 serves as the catalytic Nucleophile.

The protein belongs to the pseudouridine synthase RsuA family.

The enzyme catalyses uridine(2605) in 23S rRNA = pseudouridine(2605) in 23S rRNA. Functionally, responsible for synthesis of pseudouridine from uracil-2605 in 23S ribosomal RNA. The polypeptide is Ribosomal large subunit pseudouridine synthase B (rluB) (Haemophilus influenzae (strain ATCC 51907 / DSM 11121 / KW20 / Rd)).